Reading from the N-terminus, the 495-residue chain is UDP-N-acetylmuramoyl-L-alanyl-D-glutamate--2,6-diaminopimelate ligase (495 aa).

UDP-N-acetyl-alpha-D-muramoyl-L-alanyl-D-glutamate contacts are provided by residues Leu27, Ser29, and 44–46 (HQA). 116–122 (GTNGKTT) lines the ATP pocket. Residues Asn157, 158–159 (TT), Ser185, Gln191, and Arg193 each bind UDP-N-acetyl-alpha-D-muramoyl-L-alanyl-D-glutamate. An N6-carboxylysine modification is found at Lys225. Meso-2,6-diaminopimelate is bound by residues Arg390, 414-417 (DNPR), Gly465, and Glu469. The Meso-diaminopimelate recognition motif signature appears at 414 to 417 (DNPR).

It belongs to the MurCDEF family. MurE subfamily. Mg(2+) is required as a cofactor. In terms of processing, carboxylation is probably crucial for Mg(2+) binding and, consequently, for the gamma-phosphate positioning of ATP.

The protein localises to the cytoplasm. It catalyses the reaction UDP-N-acetyl-alpha-D-muramoyl-L-alanyl-D-glutamate + meso-2,6-diaminopimelate + ATP = UDP-N-acetyl-alpha-D-muramoyl-L-alanyl-gamma-D-glutamyl-meso-2,6-diaminopimelate + ADP + phosphate + H(+). The protein operates within cell wall biogenesis; peptidoglycan biosynthesis. Its function is as follows. Catalyzes the addition of meso-diaminopimelic acid to the nucleotide precursor UDP-N-acetylmuramoyl-L-alanyl-D-glutamate (UMAG) in the biosynthesis of bacterial cell-wall peptidoglycan. The chain is UDP-N-acetylmuramoyl-L-alanyl-D-glutamate--2,6-diaminopimelate ligase from Salmonella typhimurium (strain LT2 / SGSC1412 / ATCC 700720).